Consider the following 859-residue polypeptide: MNAIDTQNLEKHTPMMRQYLTLKAEHPEMLLFYRMGDFYELFYDDAKKASELLGISLTARGKSGGDPIPMAGLPYHAVEGYLAKLVQLRVSVAICEQVGDPATSKGPVERKVVRLVTPGTLTDEALLQEKQDNLLAAVYHGKSGYGYATLDISSGRFVVAELASTEALEAELQRTNPAELLYSEDFSEMGLISGFNGKRRRPEWEFDFDTSQKLLLDQFGTKDLRGFGLDNARLSLQAAGCLMQYVKDTQRTALPHINSIVRFNQSDSIVLDAATRRNLELTVNLQGGHENTLASVLDNTATPMGSRMLQRWIHEPLRNQQQIESRQSALTEILDTNLFETLEPQLKALGDVERITARLALRSARPRDFARLKQAISLLPEIQQSLANCQSAHLHHLARMLGEFPDELELLERAIVDNPPMLIRDGGVLKEGYNAELDQWRALSQGATDYLSELEAREKEQTGISTLKVGYNRVHGYYIEVSRRESDLVPLSYQRRQTLKNTERYIIAELKEHEEKVLSSQGKALALEKQLWEQLFDQILPKLHDLQLFAQGAAELDVINNFAERAETLNYSCPTLSQKSGIHIEGGRHPVVEQVSQTPFIANPVTLNPARKMLIVTGPNMGGKSTYMRQVALITLMTHIGCYVPAQSAVIGPVDRIFTRIGAADDLASGRSTFMVEMTETANILHNATTESLVLMDEIGRGTSTYDGLSLAWSAAEYLAQKIEAMTLFATHYFELTQLPELISNVENVHLDAIEHGDTIVFMHAVQEGAASKSYGLQVAALAGVPGKVITAAKHKLHHLESRDTNSAVDSMTTSNQQSMVFDEPVNSALNDALDKIHPDELSPRQALDILYELKRLTS.

ATP is bound at residue Gly618–Ser625.

This sequence belongs to the DNA mismatch repair MutS family.

Its function is as follows. This protein is involved in the repair of mismatches in DNA. It is possible that it carries out the mismatch recognition step. This protein has a weak ATPase activity. In Shewanella sediminis (strain HAW-EB3), this protein is DNA mismatch repair protein MutS.